A 319-amino-acid polypeptide reads, in one-letter code: Protein-methionine methyltransferase laeA (319 aa).

Residues 269–293 form a disordered region; it reads REPQSGTCSVQRENGANGDRSTLSA. Residues 270-293 are compositionally biased toward polar residues; that stretch reads EPQSGTCSVQRENGANGDRSTLSA.

This sequence belongs to the methyltransferase superfamily. LaeA methyltransferase family. As to quaternary structure, component of the heterotrimeric velvet complex composed of laeA, veA and velB; VeA acting as a bridging protein between laeA and velB.

The protein resides in the nucleus. It catalyses the reaction L-methionyl-[protein] + S-adenosyl-L-methionine = S-methyl-L-methionyl-[protein] + S-adenosyl-L-homocysteine. Its function is as follows. Methyltransferase; component of the velvet transcription factor complex that acts as a global regulator for secondary metabolite gene expression. Controls the expression of the chaetoglobosin A biosynthesis cluster via the cheR transcription factor and the subsequent production of chaetoglobosin A. Positively regulates the expression of smtA and negatively regulates the expression of velB. LaeA also regulates pigmentation and spores production. The protein is Protein-methionine methyltransferase laeA of Chaetomium globosum (strain ATCC 6205 / CBS 148.51 / DSM 1962 / NBRC 6347 / NRRL 1970) (Soil fungus).